A 214-amino-acid chain; its full sequence is Ribosomal RNA small subunit methyltransferase G (214 aa).

S-adenosyl-L-methionine contacts are provided by residues Gly81, Met86, 132–133 (VE), and Arg147.

It belongs to the methyltransferase superfamily. RNA methyltransferase RsmG family.

The protein resides in the cytoplasm. It carries out the reaction guanosine(527) in 16S rRNA + S-adenosyl-L-methionine = N(7)-methylguanosine(527) in 16S rRNA + S-adenosyl-L-homocysteine. Functionally, specifically methylates the N7 position of guanine in position 527 of 16S rRNA. The polypeptide is Ribosomal RNA small subunit methyltransferase G (Pseudomonas paraeruginosa (strain DSM 24068 / PA7) (Pseudomonas aeruginosa (strain PA7))).